A 419-amino-acid chain; its full sequence is MTDSIPSGYKPLTCDTLPGYLSSRLTPSCEPGGLPEEWKVSEVGDGNLNMVFIVEGTHKTIIVKQALPWLRAGGEGWPLSLSRAGFEYNVLCQEAKYAGHTLIPQVYFYDPEMALFAMEYLTPHVILRKELINGKKFPKLAEDIGRFLAQTLFNTSDIGMSAEQKKALTAEFALNHELCKITEDLIFTEPYYNAERNNWTSPELDDAVHKAWADVEMIQVAMRYKYKFMTEAQALLHGDLHSGSIMVTDTDTKVIDPEFGFMGPMAFDIGNYIGNLLLAYFSRPGWDANEQRRADYQEWLLQQIVQTWSVFTREFRQLWDNKTQGDAWSTEMYQQNRAALEDAQDQFFATLLEDSLVNAGMEMNRRIIGFAGVAELKQIENTELRAGCERRALTMARDLIVNARQFKNMDSVIQSAKVK.

ATP is bound by residues N49 and K64. Residue D239 coordinates substrate. 256-258 is a binding site for ATP; it reads DPE. R365 serves as a coordination point for substrate.

It belongs to the methylthioribose kinase family. Homodimer.

It carries out the reaction 5-(methylsulfanyl)-D-ribose + ATP = 5-(methylsulfanyl)-alpha-D-ribose 1-phosphate + ADP + H(+). The enzyme catalyses 5-deoxy-D-ribose + ATP = 5-deoxy-alpha-D-ribose 1-phosphate + ADP + H(+). The protein operates within amino-acid biosynthesis; L-methionine biosynthesis via salvage pathway; S-methyl-5-thio-alpha-D-ribose 1-phosphate from S-methyl-5'-thioadenosine (hydrolase route): step 2/2. Catalyzes the phosphorylation of methylthioribose into methylthioribose-1-phosphate. Also catalyzes the phosphorylation of 5-deoxyribose to 5-deoxyribose-1-phosphate. Part of a bifunctional DHAP-shunt salvage pathway for SAM by-products. This Escherichia coli O45:K1 (strain S88 / ExPEC) protein is Methylthioribose kinase.